Here is a 485-residue protein sequence, read N- to C-terminus: Palmitoyltransferase ZDHHC1 (485 aa).

The interval 1-41 (MYKMNICNKPSNKTAPEKSVWTAPAQPSGPSPELQGQRSRR) is disordered. Over 1-52 (MYKMNICNKPSNKTAPEKSVWTAPAQPSGPSPELQGQRSRRNGWSWPPHPLQ) the chain is Cytoplasmic. Positions 1 to 271 (MYKMNICNKP…GHLLCFHIYL (271 aa)) are mediates interaction with STING1. A helical membrane pass occupies residues 53-73 (IVAWLLYLFFAVIGFGILVPL). Residues 74–77 (LPHH) lie on the Lumenal side of the membrane. The helical transmembrane segment at 78–98 (WVPAGYACMGAIFAGHLVVHL) threads the bilayer. Over 99–185 (TAVSIDPADA…YRLFLHSVAS (87 aa)) the chain is Cytoplasmic. The DHHC domain occupies 134 to 184 (LHCNLCNVDVSARSKHCSACNKCVCGFDHHCKWLNNCVGERNYRLFLHSVA). Cys-164 (S-palmitoyl cysteine intermediate) is an active-site residue. Residues 186–206 (ALLGVLLLVLVATYVFVEFFV) form a helical membrane-spanning segment. Residues 207 to 241 (NPMRLRTNRHFEVLKNHTDVWFVFLPAAPVETQAP) lie on the Lumenal side of the membrane. A helical transmembrane segment spans residues 242–262 (AILALAALLILLGLLSTALLG). Residues 263–485 (HLLCFHIYLM…RGRRVRPPFS (223 aa)) lie on the Cytoplasmic side of the membrane. Disordered regions lie at residues 324–358 (EPPG…GPPV) and 462–485 (LWPP…PPFS). Residues 475-485 (WRGRRVRPPFS) are compositionally biased toward basic residues.

Belongs to the DHHC palmitoyltransferase family. As to quaternary structure, interacts with STING1; ZDHHC1 constitutively interacts with STING1 and in presence of DNA viruses activates it by promoting its cGAMP-induced oligomerization and the recruitment of downstream signaling components. As to expression, widely expressed with significant expression in heart, brain, placenta, lung, liver, kidney, testis, thymus and small intestine. Expressed at lower levels in adult pancreas and lung.

Its subcellular location is the endosome membrane. It is found in the endoplasmic reticulum membrane. The protein resides in the golgi apparatus. It catalyses the reaction L-cysteinyl-[protein] + hexadecanoyl-CoA = S-hexadecanoyl-L-cysteinyl-[protein] + CoA. Functionally, palmitoyltransferase that catalyzes the addition of palmitate onto various protein substrates, such as NCDN and NLRP3. Has a palmitoyltransferase activity toward NCDN and regulates NCDN association with endosome membranes through this palmitoylation. Acts as an activator of the NLRP3 inflammasome by mediating palmitoylation of 'Cys-130' and 'Cys-958' of NLRP3, thereby promoting NLRP3 phosphorylation and activation by NEK7. Also has a palmitoyltransferase activity-independent function in DNA virus-triggered and CGAS-mediated innate immune response. Functions as an activator of STING1 by promoting its cGAMP-induced oligomerization and the recruitment of downstream signaling components. The sequence is that of Palmitoyltransferase ZDHHC1 from Homo sapiens (Human).